The primary structure comprises 460 residues: tRNA modification GTPase MnmE (460 aa).

(6S)-5-formyl-5,6,7,8-tetrahydrofolate-binding residues include Arg23, Glu86, and Arg126. The region spanning 222-381 (GLSTAIIGRP…LEAAIASLFF (160 aa)) is the TrmE-type G domain. Asn232 provides a ligand contact to K(+). Residues 232 to 237 (NVGKSS), 251 to 257 (TDIAGTT), and 276 to 279 (DTAG) each bind GTP. Ser236 serves as a coordination point for Mg(2+). Residues Thr251, Ile253, and Thr256 each coordinate K(+). Thr257 contributes to the Mg(2+) binding site. Lys460 contributes to the (6S)-5-formyl-5,6,7,8-tetrahydrofolate binding site.

It belongs to the TRAFAC class TrmE-Era-EngA-EngB-Septin-like GTPase superfamily. TrmE GTPase family. As to quaternary structure, homodimer. Heterotetramer of two MnmE and two MnmG subunits. Requires K(+) as cofactor.

The protein localises to the cytoplasm. Exhibits a very high intrinsic GTPase hydrolysis rate. Involved in the addition of a carboxymethylaminomethyl (cmnm) group at the wobble position (U34) of certain tRNAs, forming tRNA-cmnm(5)s(2)U34. In Exiguobacterium sibiricum (strain DSM 17290 / CCUG 55495 / CIP 109462 / JCM 13490 / 255-15), this protein is tRNA modification GTPase MnmE.